The chain runs to 70 residues: Large ribosomal subunit protein bL31 (70 aa).

Zn(2+) contacts are provided by cysteine 16, cysteine 18, cysteine 37, and cysteine 40.

It belongs to the bacterial ribosomal protein bL31 family. Type A subfamily. In terms of assembly, part of the 50S ribosomal subunit. It depends on Zn(2+) as a cofactor.

In terms of biological role, binds the 23S rRNA. This Saccharophagus degradans (strain 2-40 / ATCC 43961 / DSM 17024) protein is Large ribosomal subunit protein bL31.